Here is a 215-residue protein sequence, read N- to C-terminus: UPF0441 protein SG0265 (215 aa).

It belongs to the UPF0441 family.

This Sodalis glossinidius (strain morsitans) protein is UPF0441 protein SG0265.